The chain runs to 747 residues: Ferrichrome outer membrane transporter/phage receptor (747 aa).

Positions 1–33 are cleaved as a signal peptide; it reads MARSKTAQPKHSLRKIAVVVATAVSGMSVYAQA. Residues 34–192 are Periplasmic-facing; it reads AVEPKEDTIT…NMVSKRPTTE (159 aa). The TonB box motif lies at 40-47; that stretch reads DTITVTAA. The TBDR plug domain maps to 75–187; sequence PIQKVPQSIS…PGGLLNMVSK (113 aa). Ferrichrome is bound by residues Arg114, Gln133, and 148-149; that span reads FY. A TBDR beta-barrel domain is found at 192-747; sequence EPLKEVQFKA…QVVATATFRF (556 aa). Residues 193-201 traverse the membrane as a beta stranded segment; it reads PLKEVQFKA. Residues 202–206 lie on the Extracellular side of the membrane; it reads GTDSL. Residues 207 to 215 form a beta stranded membrane-spanning segment; it reads FQTGFDFSD. Over 216-222 the chain is Periplasmic; sequence SLDDDGV. A beta stranded transmembrane segment spans residues 223–231; it reads YSYRLTGLA. Residues 232–245 lie on the Extracellular side of the membrane; sequence RSANAQQKGSEEQR. A beta stranded transmembrane segment spans residues 246-255; that stretch reads YAIAPAFTWR. The Periplasmic segment spans residues 256–259; that stretch reads PDDK. Residues 260-268 form a beta stranded membrane-spanning segment; the sequence is TNFTFLSYF. Residues 269 to 312 are Extracellular-facing; the sequence is QNEPETGYYGWLPKEGTVEPLPNGKRLPTDFNEGAKNNTYSRNE. 277-279 contributes to the ferrichrome binding site; the sequence is YGW. Residues 313 to 321 form a beta stranded membrane-spanning segment; that stretch reads KMVGYSFDH. The Periplasmic portion of the chain corresponds to 322–326; it reads EFNDT. The beta stranded transmembrane segment at 327 to 335 threads the bilayer; that stretch reads FTVRQNLRF. The Extracellular segment spans residues 336-387; it reads AENKTSQNSVYGYGVCSDPANAYSKQCAALAPADKGHYLARKYVVDDEKLQN. Ferrichrome is bound at residue 346–348; sequence YGY. An intrachain disulfide couples Cys351 to Cys362. A beta stranded membrane pass occupies residues 388–396; the sequence is FSVDTQLQS. Residues 397–404 lie on the Periplasmic side of the membrane; that stretch reads KFATGDID. A beta stranded membrane pass occupies residues 405-413; that stretch reads HTLLTGVDF. Residues 414-464 lie on the Extracellular side of the membrane; the sequence is MRMRNDINAWFGYDDSVPLLNLYNPVNTDFDFNAKDPANSGPYRILNKQKQ. Position 424 (Phe424) interacts with ferrichrome. The beta stranded transmembrane segment at 465-473 threads the bilayer; that stretch reads TGVYVQDQA. The Periplasmic portion of the chain corresponds to 474 to 477; it reads QWDK. A beta stranded transmembrane segment spans residues 478–486; it reads VLVTLGGRY. Over 487–508 the chain is Extracellular; sequence DWADQESLNRVAGTTDKRDDKQ. The chain crosses the membrane as a beta stranded span at residues 509–517; sequence FTWRGGVNY. At 518 to 522 the chain is on the periplasmic side; sequence LFDNG. A beta stranded transmembrane segment spans residues 523 to 531; it reads VTPYFSYSE. The Extracellular segment spans residues 532 to 551; that stretch reads SFEPSSQVGKDGNIFAPSKG. Residues 552 to 560 traverse the membrane as a beta stranded segment; that stretch reads KQYEVGVKY. The Periplasmic portion of the chain corresponds to 561 to 565; that stretch reads VPEDR. The beta stranded transmembrane segment at 566–574 threads the bilayer; sequence PIVVTGAVY. The Extracellular portion of the chain corresponds to 575–601; that stretch reads NLTKTNNLMADPEGSFFSVEGGEIRAR. Residues 602–610 form a beta stranded membrane-spanning segment; the sequence is GVEIEAKAA. Topologically, residues 611-613 are periplasmic; it reads LSA. Residues 614–622 traverse the membrane as a beta stranded segment; sequence SVNVVGSYT. Residues 623-645 are Extracellular-facing; sequence YTDAEYTTDTTYKGNTPAQVPKH. A beta stranded membrane pass occupies residues 646–654; that stretch reads MASLWADYT. Residues 655 to 661 lie on the Periplasmic side of the membrane; that stretch reads FFDGPLS. Residues 662–670 traverse the membrane as a beta stranded segment; that stretch reads GLTLGTGGR. Residues 671–689 are Extracellular-facing; that stretch reads YTGSSYGDPANSFKVGSYT. A beta stranded transmembrane segment spans residues 690–698; that stretch reads VVDALVRYD. Residues 699 to 705 are Periplasmic-facing; that stretch reads LARVGMA. The chain crosses the membrane as a beta stranded span at residues 706–714; it reads GSNVALHVN. Residues 715-737 are Extracellular-facing; sequence NLFDREYVASCFNTYGCFWGAER. Cys725 and Cys731 are oxidised to a cystine. The short motif at 730 to 747 is the TonB C-terminal box element; sequence GCFWGAERQVVATATFRF. Residue Ala735 coordinates ferrichrome. Residues 738 to 746 traverse the membrane as a beta stranded segment; that stretch reads QVVATATFR. A topological domain (periplasmic) is located at residue Phe747.

This sequence belongs to the TonB-dependent receptor family. In terms of assembly, monomer. Interacts with TonB. Interacts with Escherichia phage T5 receptor-binding protein pb5 (RBP-pb5); this interaction is necessary for the entry of the viral genome into the host cell.

It is found in the cell outer membrane. Its activity is regulated as follows. Binding of ferrichrome or colicin M enhances the interaction between FhuA and TonB. TonB activates FhuA through interaction with the beta-barrel. Its function is as follows. Involved in the uptake of iron in complex with ferrichrome, a hydroxamate-type siderophore. Binds and transports ferrichrome-iron across the outer membrane. In addition to its role in ferrichrome-iron transport, transports the antibiotic albomycin, which is a structural analog of ferrichrome, and acts as a receptor for colicin M, microcin J25 and bacteriophages T1, T5, phi80 and UC-1. The energy source, which is required for all FhuA functions except infection by phage T5, is provided by the inner membrane TonB system. This Escherichia coli (strain K12) protein is Ferrichrome outer membrane transporter/phage receptor.